Consider the following 725-residue polypeptide: Phosphoribosylformylglycinamidine synthase subunit PurL (725 aa).

His42 is an active-site residue. Positions 45 and 84 each coordinate ATP. Position 86 (Glu86) interacts with Mg(2+). Substrate is bound by residues 87 to 90 (SHNH) and Arg109. His88 acts as the Proton acceptor in catalysis. Asp110 is a Mg(2+) binding site. Residue Gln237 coordinates substrate. Asp265 is a Mg(2+) binding site. Position 309 to 311 (309 to 311 (ESQ)) interacts with substrate. Positions 491 and 528 each coordinate ATP. Asn529 is a Mg(2+) binding site. Residue Ser531 participates in substrate binding.

The protein belongs to the FGAMS family. As to quaternary structure, monomer. Part of the FGAM synthase complex composed of 1 PurL, 1 PurQ and 2 PurS subunits.

It localises to the cytoplasm. It catalyses the reaction N(2)-formyl-N(1)-(5-phospho-beta-D-ribosyl)glycinamide + L-glutamine + ATP + H2O = 2-formamido-N(1)-(5-O-phospho-beta-D-ribosyl)acetamidine + L-glutamate + ADP + phosphate + H(+). It participates in purine metabolism; IMP biosynthesis via de novo pathway; 5-amino-1-(5-phospho-D-ribosyl)imidazole from N(2)-formyl-N(1)-(5-phospho-D-ribosyl)glycinamide: step 1/2. Functionally, part of the phosphoribosylformylglycinamidine synthase complex involved in the purines biosynthetic pathway. Catalyzes the ATP-dependent conversion of formylglycinamide ribonucleotide (FGAR) and glutamine to yield formylglycinamidine ribonucleotide (FGAM) and glutamate. The FGAM synthase complex is composed of three subunits. PurQ produces an ammonia molecule by converting glutamine to glutamate. PurL transfers the ammonia molecule to FGAR to form FGAM in an ATP-dependent manner. PurS interacts with PurQ and PurL and is thought to assist in the transfer of the ammonia molecule from PurQ to PurL. The sequence is that of Phosphoribosylformylglycinamidine synthase subunit PurL from Campylobacter lari (strain RM2100 / D67 / ATCC BAA-1060).